The sequence spans 436 residues: UPF0597 protein YhaM (436 aa).

The protein belongs to the UPF0597 family.

This is UPF0597 protein YhaM from Salmonella paratyphi B (strain ATCC BAA-1250 / SPB7).